The following is a 501-amino-acid chain: Protein anon-37Cs (501 aa).

The protein localises to the cytoplasm. Its function is as follows. Has a non-vital function. In Drosophila simulans (Fruit fly), this protein is Protein anon-37Cs (anon-37Cs).